Reading from the N-terminus, the 51-residue chain is Defensin-like protein 2A (51 aa).

Gln1 bears the Pyrrolidone carboxylic acid mark. Cystine bridges form between Cys4–Cys51, Cys15–Cys36, Cys21–Cys45, and Cys25–Cys47. Ser8 bears the Phosphoserine; by CPK mark.

As to quaternary structure, forms oligomers in its native state.

Its function is as follows. Possesses antifungal activity sensitive to inorganic cations. This is Defensin-like protein 2A from Sinapis alba (White mustard).